Consider the following 144-residue polypeptide: MKTFSAKPHEVKHEWFVVDATDKVLGRLAAAIAHRLRGKHKPIYTPHVDTGDYIVVINVDKLRVTGNKAEDKIYYRHSGYPGGLYETTFKKMHARFPARPLEKAVKGMLPKGPLGYAMIKKLKIYAGDIHPHAAQQPQSLEINA.

Belongs to the universal ribosomal protein uL13 family. As to quaternary structure, part of the 50S ribosomal subunit.

Functionally, this protein is one of the early assembly proteins of the 50S ribosomal subunit, although it is not seen to bind rRNA by itself. It is important during the early stages of 50S assembly. The polypeptide is Large ribosomal subunit protein uL13 (Nitrosomonas eutropha (strain DSM 101675 / C91 / Nm57)).